The primary structure comprises 266 residues: Cell division cycle-associated protein 3 (266 aa).

A disordered region spans residues 1 to 84 (MGSTQSVSGT…TPMKISGPDP (84 aa)). 2 positions are modified to phosphoserine: Ser-29 and Ser-31. The segment covering 32–46 (AGIQRTPIQVESSPQ) has biased composition (polar residues). Thr-37 carries the post-translational modification Phosphothreonine. Residues Ser-44 and Ser-67 each carry the phosphoserine modification. The residue at position 75 (Thr-75) is a Phosphothreonine. An F-box-like region spans residues 90-119 (KELSEVLETEASESISSPELALPRETPLFY). Ser-93 is subject to Phosphoserine. Disordered regions lie at residues 120 to 225 (DLDL…LSEN) and 242 to 266 (KAGG…LLES). Residues 143–156 (LDPKQVFTKEEAKQ) are compositionally biased toward basic and acidic residues. Positions 157-168 (SAETIAASQNSD) are enriched in polar residues. Ser-197 is modified (phosphoserine). At Thr-200 the chain carries Phosphothreonine. Over residues 203–213 (QDDNSPGTLTL) the composition is skewed to polar residues. Ser-207 bears the Phosphoserine mark. Thr-210 bears the Phosphothreonine mark. Over residues 250-259 (PNQDHDKENQ) the composition is skewed to basic and acidic residues. The short motif at 256-258 (KEN) is the KEN box element.

In terms of assembly, interacts with SKP1. Part of a SCF (SKP1-cullin-F-box) protein ligase complex. Post-translationally, ubiquitinated and degraded by the APC/C-Cdh1 complex.

The protein localises to the cytoplasm. The protein resides in the cytosol. It participates in protein modification; protein ubiquitination. Functionally, F-box-like protein which is required for entry into mitosis. Acts by participating in E3 ligase complexes that mediate the ubiquitination and degradation of WEE1 kinase at G2/M phase. In Mus musculus (Mouse), this protein is Cell division cycle-associated protein 3 (Cdca3).